A 338-amino-acid chain; its full sequence is Anthranilate phosphoribosyltransferase (338 aa).

5-phospho-alpha-D-ribose 1-diphosphate is bound by residues Gly-81, 84–85 (GD), Thr-89, 91–94 (NIST), 109–117 (KHGNRAVSS), and Ser-121. Gly-81 lines the anthranilate pocket. Position 93 (Ser-93) interacts with Mg(2+). Asn-112 provides a ligand contact to anthranilate. Anthranilate is bound at residue Arg-167. Mg(2+) contacts are provided by Asp-226 and Glu-227.

The protein belongs to the anthranilate phosphoribosyltransferase family. As to quaternary structure, homodimer. Requires Mg(2+) as cofactor.

The enzyme catalyses N-(5-phospho-beta-D-ribosyl)anthranilate + diphosphate = 5-phospho-alpha-D-ribose 1-diphosphate + anthranilate. Its pathway is amino-acid biosynthesis; L-tryptophan biosynthesis; L-tryptophan from chorismate: step 2/5. In terms of biological role, catalyzes the transfer of the phosphoribosyl group of 5-phosphorylribose-1-pyrophosphate (PRPP) to anthranilate to yield N-(5'-phosphoribosyl)-anthranilate (PRA). The protein is Anthranilate phosphoribosyltransferase of Myxococcus xanthus (strain DK1622).